Consider the following 256-residue polypeptide: Ubiquinone/menaquinone biosynthesis C-methyltransferase UbiE (256 aa).

S-adenosyl-L-methionine contacts are provided by residues T79, D100, and 128–129 (DA).

Belongs to the class I-like SAM-binding methyltransferase superfamily. MenG/UbiE family.

It catalyses the reaction a 2-demethylmenaquinol + S-adenosyl-L-methionine = a menaquinol + S-adenosyl-L-homocysteine + H(+). It carries out the reaction a 2-methoxy-6-(all-trans-polyprenyl)benzene-1,4-diol + S-adenosyl-L-methionine = a 5-methoxy-2-methyl-3-(all-trans-polyprenyl)benzene-1,4-diol + S-adenosyl-L-homocysteine + H(+). It functions in the pathway quinol/quinone metabolism; menaquinone biosynthesis; menaquinol from 1,4-dihydroxy-2-naphthoate: step 2/2. It participates in cofactor biosynthesis; ubiquinone biosynthesis. Its function is as follows. Methyltransferase required for the conversion of demethylmenaquinol (DMKH2) to menaquinol (MKH2) and the conversion of 2-polyprenyl-6-methoxy-1,4-benzoquinol (DDMQH2) to 2-polyprenyl-3-methyl-6-methoxy-1,4-benzoquinol (DMQH2). The polypeptide is Ubiquinone/menaquinone biosynthesis C-methyltransferase UbiE (Stutzerimonas stutzeri (strain A1501) (Pseudomonas stutzeri)).